The following is a 232-amino-acid chain: Orotidine 5'-phosphate decarboxylase (232 aa).

Substrate is bound by residues Asp13, Lys35, 62-71 (DLKFHDIPNT), Thr122, Arg182, Gln191, Gly211, and Arg212. Lys64 functions as the Proton donor in the catalytic mechanism.

It belongs to the OMP decarboxylase family. Type 1 subfamily. In terms of assembly, homodimer.

The catalysed reaction is orotidine 5'-phosphate + H(+) = UMP + CO2. It participates in pyrimidine metabolism; UMP biosynthesis via de novo pathway; UMP from orotate: step 2/2. Its function is as follows. Catalyzes the decarboxylation of orotidine 5'-monophosphate (OMP) to uridine 5'-monophosphate (UMP). This chain is Orotidine 5'-phosphate decarboxylase, found in Pseudomonas syringae pv. syringae (strain B728a).